A 316-amino-acid polypeptide reads, in one-letter code: Malate dehydrogenase 2 (316 aa).

NAD(+) is bound by residues 10–15 (GGGQIG) and Asp34. Substrate-binding residues include Arg83 and Arg89. Residues Asn96 and 119 to 121 (ISN) each bind NAD(+). Substrate-binding residues include Asn121 and Arg152. His176 (proton acceptor) is an active-site residue.

The protein belongs to the LDH/MDH superfamily. MDH type 3 family.

The enzyme catalyses (S)-malate + NAD(+) = oxaloacetate + NADH + H(+). In terms of biological role, catalyzes the reversible oxidation of malate to oxaloacetate. The polypeptide is Malate dehydrogenase 2 (Anaeromyxobacter dehalogenans (strain 2CP-C)).